Reading from the N-terminus, the 71-residue chain is Omega-conotoxin-like CnVIIF (71 aa).

Cystine bridges form between Cys-46/Cys-61, Cys-53/Cys-65, and Cys-60/Cys-70. Cys-70 carries the cysteine amide; in CnVIID modification.

It belongs to the conotoxin M superfamily. Expressed by the venom duct.

It is found in the secreted. Omega-conotoxins act at presynaptic membranes, they bind and block voltage-gated calcium channels (Cav). This Conus consors (Singed cone) protein is Omega-conotoxin-like CnVIIF.